A 279-amino-acid chain; its full sequence is Urease accessory protein UreD (279 aa).

Belongs to the UreD family. UreD, UreF and UreG form a complex that acts as a GTP-hydrolysis-dependent molecular chaperone, activating the urease apoprotein by helping to assemble the nickel containing metallocenter of UreC. The UreE protein probably delivers the nickel.

Its subcellular location is the cytoplasm. In terms of biological role, required for maturation of urease via the functional incorporation of the urease nickel metallocenter. In Rhodopseudomonas palustris (strain ATCC BAA-98 / CGA009), this protein is Urease accessory protein UreD.